Reading from the N-terminus, the 448-residue chain is Iroquois-class homeodomain protein irx-3 (448 aa).

A DNA-binding region (homeobox; TALE-type) is located at residues 108-170; the sequence is DPSRPKNATR…NARRRLKKEN (63 aa). The tract at residues 171–247 is disordered; that stretch reads KMTWAPRSRT…EVSDGFEDLN (77 aa). Over residues 195–222 the composition is skewed to acidic residues; it reads KHEDEEEIDLENIDTEDIESKEDLDDPD. Over residues 223–237 the composition is skewed to basic and acidic residues; that stretch reads TDIHSDSKTDTRSDS. Residues 238–247 show a composition bias toward acidic residues; sequence EVSDGFEDLN.

Belongs to the TALE/IRO homeobox family. As to expression, primarily expressed in the developing central nervous system (CNS). At gastrula stage, expressed in both the superficial and deep layers of the presumptive neural plate with expression spreading to the prospective hindbrain, spinal cord and midbrain-hindbrain junction as neurulation proceeds. Not expressed in the anterior neural plate and CNS expression in the tadpole excludes the forebrain. Outside of the CNS, expressed around the closing blastopore at early gastrula stages and as gastrulation proceeds, expression switches to the anterior lateral plate mesoderm. In tadpoles, expressed in the ectodermal layer of the branchial arches, and in the otic vesicle. Also expressed in specific and overlapping dynamic patterns with irx1 and irx2 during pronephric kidney development. Renal expression begins before segment-specific terminal differentiation in the pronephric anlage at mid-neurula stage, and is later found in proximal tubule PT3 as well as intermediate tubule segments IT1 and IT2, with expression in the kidney being maintained through to the tadpole stage.

The protein localises to the nucleus. Its function is as follows. Acts partially redundantly with other irx members in neural patterning. Required for formation of the posterior forebrain, midbrain, hindbrain, and to a lesser extent, spinal cord. Both up-regulates and down-regulates gene expression during neural development. Acts early in neural plate development to induce proneural gene expression and specify a neural precursor state. Also up-regulates repressors that prevent neuronal differentiation. Required during at least two stages of pronephros kidney development; during neurula stages, maintains transcription of key renal genes to define the size and identity of the pronephric anlage, probably in part through regulation of bmp-signaling. Subsequently required for proper formation of the intermediate tubule segment of the pronephros. This chain is Iroquois-class homeodomain protein irx-3 (irx3), found in Xenopus laevis (African clawed frog).